The following is a 347-amino-acid chain: S-adenosylmethionine:tRNA ribosyltransferase-isomerase (347 aa).

This sequence belongs to the QueA family. As to quaternary structure, monomer.

The protein resides in the cytoplasm. It carries out the reaction 7-aminomethyl-7-carbaguanosine(34) in tRNA + S-adenosyl-L-methionine = epoxyqueuosine(34) in tRNA + adenine + L-methionine + 2 H(+). The protein operates within tRNA modification; tRNA-queuosine biosynthesis. Transfers and isomerizes the ribose moiety from AdoMet to the 7-aminomethyl group of 7-deazaguanine (preQ1-tRNA) to give epoxyqueuosine (oQ-tRNA). This chain is S-adenosylmethionine:tRNA ribosyltransferase-isomerase, found in Streptococcus thermophilus (strain CNRZ 1066).